Reading from the N-terminus, the 244-residue chain is tRNA (guanine-N(7)-)-methyltransferase (244 aa).

Residues Glu75, Glu100, Asp127, and Asp150 each contribute to the S-adenosyl-L-methionine site. The active site involves Asp150. Residues Lys154, Asp186, and 223–226 (TRFE) each bind substrate.

This sequence belongs to the class I-like SAM-binding methyltransferase superfamily. TrmB family.

It catalyses the reaction guanosine(46) in tRNA + S-adenosyl-L-methionine = N(7)-methylguanosine(46) in tRNA + S-adenosyl-L-homocysteine. It participates in tRNA modification; N(7)-methylguanine-tRNA biosynthesis. In terms of biological role, catalyzes the formation of N(7)-methylguanine at position 46 (m7G46) in tRNA. The sequence is that of tRNA (guanine-N(7)-)-methyltransferase from Xylella fastidiosa (strain M23).